Consider the following 606-residue polypeptide: WD repeat-containing protein 1 (606 aa).

WD repeat units lie at residues 4 to 45 (EIKK…LRNI), 48 to 87 (PAIA…IWDT), 93 to 135 (LLKY…LWDS), 138 to 176 (SVGE…FFEG), 180 to 218 (KFKF…IYDG), 224 to 263 (VCAL…IWDV), 270 to 306 (NTFT…YLDK), 311 to 351 (KPLR…YWDS), 358 to 408 (SFAG…KLDV), 432 to 474 (LKDQ…LYSI), 480 to 518 (KDEG…VFSV), 523 to 561 (SENN…VWTL), and 566 to 604 (TRVK…EWTI). Lys-28, Lys-81, Lys-95, and Lys-115 each carry N6-acetyllysine. Residue Tyr-238 is modified to Phosphotyrosine. Lys-480 bears the N6-acetyllysine mark.

This sequence belongs to the WD repeat AIP1 family.

The protein localises to the cytoplasm. It localises to the cytoskeleton. The protein resides in the cell projection. Its subcellular location is the podosome. In terms of biological role, induces disassembly of actin filaments in conjunction with ADF/cofilin family proteins. Enhances cofilin-mediated actin severing. Involved in cytokinesis. Involved in chemotactic cell migration by restricting lamellipodial membrane protrusions. Involved in myocardium sarcomere organization. Required for cardiomyocyte growth and maintenance. Involved in megakaryocyte maturation and platelet shedding. Required for the establishment of planar cell polarity (PCP) during follicular epithelium development and for cell shape changes during PCP; the function seems to implicate cooperation with CFL1 and/or DSTN/ADF. Involved in the generation/maintenance of cortical tension. Involved in assembly and maintenance of epithelial apical cell junctions and plays a role in the organization of the perijunctional actomyosin belt. In Bos taurus (Bovine), this protein is WD repeat-containing protein 1 (WDR1).